A 331-amino-acid chain; its full sequence is DNA-directed RNA polymerase subunit alpha (331 aa).

An alpha N-terminal domain (alpha-NTD) region spans residues 1 to 226; that stretch reads MLIAQRPTLT…ELFGLARELN (226 aa). The interval 243-331 is alpha C-terminal domain (alpha-CTD); it reads LSSELSMPIE…SYDEDETTTN (89 aa).

This sequence belongs to the RNA polymerase alpha chain family. As to quaternary structure, homodimer. The RNAP catalytic core consists of 2 alpha, 1 beta, 1 beta' and 1 omega subunit. When a sigma factor is associated with the core the holoenzyme is formed, which can initiate transcription.

It carries out the reaction RNA(n) + a ribonucleoside 5'-triphosphate = RNA(n+1) + diphosphate. In terms of biological role, DNA-dependent RNA polymerase catalyzes the transcription of DNA into RNA using the four ribonucleoside triphosphates as substrates. The sequence is that of DNA-directed RNA polymerase subunit alpha from Clavibacter michiganensis subsp. michiganensis (strain NCPPB 382).